The chain runs to 494 residues: 4-trimethylaminobutyraldehyde dehydrogenase (494 aa).

Position 2 is an N-acetylserine (Ser-2). The residue at position 30 (Lys-30) is an N6-acetyllysine; alternate. Lys-30 is subject to N6-succinyllysine; alternate. At Lys-59 the chain carries N6-succinyllysine. NAD(+) contacts are provided by residues Lys-180 and 232 to 236; that span reads GSVPT. Catalysis depends on Glu-254, which acts as the Proton acceptor. Catalysis depends on Cys-288, which acts as the Nucleophile. Lys-298 carries the N6-acetyllysine modification. Lys-303 bears the N6-acetyllysine; alternate mark. Lys-303 carries the N6-succinyllysine; alternate modification. Lys-344 is subject to N6-acetyllysine. Glu-391 lines the NAD(+) pocket.

The protein belongs to the aldehyde dehydrogenase family. In terms of assembly, homotetramer.

The protein resides in the cytoplasm. Its subcellular location is the cytosol. It carries out the reaction 4-(trimethylamino)butanal + NAD(+) + H2O = 4-(trimethylamino)butanoate + NADH + 2 H(+). The enzyme catalyses an aldehyde + NAD(+) + H2O = a carboxylate + NADH + 2 H(+). It catalyses the reaction 4-aminobutanal + NAD(+) + H2O = 4-aminobutanoate + NADH + 2 H(+). The catalysed reaction is formaldehyde + NAD(+) + H2O = formate + NADH + 2 H(+). It carries out the reaction acetaldehyde + NAD(+) + H2O = acetate + NADH + 2 H(+). The enzyme catalyses imidazole-4-acetaldehyde + NAD(+) + H2O = imidazole-4-acetate + NADH + 2 H(+). It catalyses the reaction acrolein + NAD(+) + H2O = acrylate + NADH + 2 H(+). The catalysed reaction is (5-hydroxyindol-3-yl)acetaldehyde + NAD(+) + H2O = (5-hydroxyindol-3-yl)acetate + NADH + 2 H(+). It carries out the reaction 3,4-dihydroxyphenylacetaldehyde + NAD(+) + H2O = 3,4-dihydroxyphenylacetate + NADH + 2 H(+). The enzyme catalyses spermine monoaldehyde + NAD(+) + H2O = N-(2-carboxyethyl)spermidine + NADH + 2 H(+). It catalyses the reaction propanal + NAD(+) + H2O = propanoate + NADH + 2 H(+). The catalysed reaction is butanal + NAD(+) + H2O = butanoate + NADH + 2 H(+). It carries out the reaction pentanal + NAD(+) + H2O = pentanoate + NADH + 2 H(+). The enzyme catalyses hexanal + NAD(+) + H2O = hexanoate + NADH + 2 H(+). It functions in the pathway amine and polyamine biosynthesis; carnitine biosynthesis. In terms of biological role, converts gamma-trimethylaminobutyraldehyde into gamma-butyrobetaine with high efficiency (in vitro). Can catalyze the irreversible oxidation of a broad range of aldehydes to the corresponding acids in an NAD-dependent reaction, but with low efficiency. Catalyzes the oxidation of aldehydes arising from biogenic amines and polyamines. This is 4-trimethylaminobutyraldehyde dehydrogenase (ALDH9A1) from Pongo abelii (Sumatran orangutan).